A 239-amino-acid chain; its full sequence is Purine nucleoside phosphorylase DeoD-type (239 aa).

H5 lines the a purine D-ribonucleoside pocket. Residues G21, R25, R44, and 88–91 (RVGS) each bind phosphate. A purine D-ribonucleoside is bound by residues 180 to 182 (EME) and 204 to 205 (SD). The active-site Proton donor is D205.

It belongs to the PNP/UDP phosphorylase family. Homohexamer; trimer of homodimers.

It carries out the reaction a purine D-ribonucleoside + phosphate = a purine nucleobase + alpha-D-ribose 1-phosphate. The enzyme catalyses a purine 2'-deoxy-D-ribonucleoside + phosphate = a purine nucleobase + 2-deoxy-alpha-D-ribose 1-phosphate. Its function is as follows. Catalyzes the reversible phosphorolytic breakdown of the N-glycosidic bond in the beta-(deoxy)ribonucleoside molecules, with the formation of the corresponding free purine bases and pentose-1-phosphate. This chain is Purine nucleoside phosphorylase DeoD-type, found in Citrobacter koseri (strain ATCC BAA-895 / CDC 4225-83 / SGSC4696).